Here is a 404-residue protein sequence, read N- to C-terminus: Tryptophan synthase beta chain (404 aa).

The residue at position 94 (Lys-94) is an N6-(pyridoxal phosphate)lysine.

It belongs to the TrpB family. In terms of assembly, tetramer of two alpha and two beta chains. Pyridoxal 5'-phosphate is required as a cofactor.

It carries out the reaction (1S,2R)-1-C-(indol-3-yl)glycerol 3-phosphate + L-serine = D-glyceraldehyde 3-phosphate + L-tryptophan + H2O. Its pathway is amino-acid biosynthesis; L-tryptophan biosynthesis; L-tryptophan from chorismate: step 5/5. Its function is as follows. The beta subunit is responsible for the synthesis of L-tryptophan from indole and L-serine. This Staphylococcus aureus (strain bovine RF122 / ET3-1) protein is Tryptophan synthase beta chain.